The primary structure comprises 129 residues: Small ribosomal subunit protein uS8 (129 aa).

The protein belongs to the universal ribosomal protein uS8 family. As to quaternary structure, part of the 30S ribosomal subunit. Contacts proteins S5 and S12.

Its function is as follows. One of the primary rRNA binding proteins, it binds directly to 16S rRNA central domain where it helps coordinate assembly of the platform of the 30S subunit. This Mesoplasma florum (strain ATCC 33453 / NBRC 100688 / NCTC 11704 / L1) (Acholeplasma florum) protein is Small ribosomal subunit protein uS8.